Consider the following 419-residue polypeptide: Acyl-coenzyme A thioesterase 1 (419 aa).

Residues S232, D324, and H358 each act as charge relay system in the active site. S416 carries the phosphoserine modification.

It belongs to the C/M/P thioester hydrolase family. In terms of assembly, monomer. Expressed in liver.

Its subcellular location is the cytoplasm. It is found in the cytosol. The catalysed reaction is hexadecanoyl-CoA + H2O = hexadecanoate + CoA + H(+). The enzyme catalyses dodecanoyl-CoA + H2O = dodecanoate + CoA + H(+). It carries out the reaction tetradecanoyl-CoA + H2O = tetradecanoate + CoA + H(+). It catalyses the reaction decanoyl-CoA + H2O = decanoate + CoA + H(+). The catalysed reaction is octadecanoyl-CoA + H2O = octadecanoate + CoA + H(+). The enzyme catalyses eicosanoyl-CoA + H2O = eicosanoate + CoA + H(+). It carries out the reaction (9Z)-octadecenoyl-CoA + H2O = (9Z)-octadecenoate + CoA + H(+). It catalyses the reaction (9Z)-hexadecenoyl-CoA + H2O = (9Z)-hexadecenoate + CoA + H(+). The catalysed reaction is (9E)-octadecenoyl-CoA + H2O = (9E)-octadecenoate + CoA + H(+). Its pathway is lipid metabolism; fatty acid metabolism. In terms of biological role, catalyzes the hydrolysis of acyl-CoAs into free fatty acids and coenzyme A (CoASH), regulating their respective intracellular levels. More active towards saturated and unsaturated long chain fatty acyl-CoAs (C12-C20). The polypeptide is Acyl-coenzyme A thioesterase 1 (Acot1) (Rattus norvegicus (Rat)).